Reading from the N-terminus, the 108-residue chain is MNAANAVKYPELKIKLESYDSTLLDLTTKKIVEVVKGVDVKIKGPLPLPTKKEVITIIRSPHVDKASREQFEKNRHKRLMILVDVNQGAIDSLKRIKIPVGVTLRFSK.

It belongs to the universal ribosomal protein uS10 family. As to quaternary structure, part of the 30S ribosomal subunit.

Involved in the binding of tRNA to the ribosomes. The chain is Small ribosomal subunit protein uS10 from Mycoplasma pneumoniae (strain ATCC 29342 / M129 / Subtype 1) (Mycoplasmoides pneumoniae).